The sequence spans 289 residues: Dehydrodolichyl diphosphate synthase 4 (289 aa).

Residues 2 to 22 (LSMLWFLLSLLSLLLLPCLRP) form a helical membrane-spanning segment.

Belongs to the UPP synthase family. Mg(2+) serves as cofactor.

It is found in the endoplasmic reticulum membrane. It participates in protein modification; protein glycosylation. Its function is as follows. Catalyzes cis-prenyl chain elongation to produce the polyprenyl backbone of dolichol, a glycosyl carrier-lipid required for the biosynthesis of several classes of glycoprotein. This Arabidopsis thaliana (Mouse-ear cress) protein is Dehydrodolichyl diphosphate synthase 4.